We begin with the raw amino-acid sequence, 469 residues long: Glutamate--tRNA ligase (469 aa).

Residues 11–21 carry the 'HIGH' region motif; it reads PSPTGFIHLGN. The 'KMSKS' region signature appears at 243–247; the sequence is KMSKR. Lys246 is a binding site for ATP.

It belongs to the class-I aminoacyl-tRNA synthetase family. Glutamate--tRNA ligase type 1 subfamily. In terms of assembly, monomer.

It is found in the cytoplasm. It catalyses the reaction tRNA(Glu) + L-glutamate + ATP = L-glutamyl-tRNA(Glu) + AMP + diphosphate. Catalyzes the attachment of glutamate to tRNA(Glu) in a two-step reaction: glutamate is first activated by ATP to form Glu-AMP and then transferred to the acceptor end of tRNA(Glu). This Burkholderia cenocepacia (strain HI2424) protein is Glutamate--tRNA ligase.